A 661-amino-acid polypeptide reads, in one-letter code: UvrABC system protein B (661 aa).

The Helicase ATP-binding domain occupies 25–414 (AGLNSKKRSQ…DTVVELIIRP (390 aa)). Residue 38–45 (GITGSGKT) coordinates ATP. The Beta-hairpin signature appears at 91-114 (YYDYYQPEAYIARTDTFIEKDSSI). Residues 430 to 592 (QVEDLIGEIQ…IIPKTINRAI (163 aa)) form the Helicase C-terminal domain. The UVR domain occupies 621–656 (KAHIEKLKKDMLKAASNLEFEQAAKLRDQLKTLEEA).

Belongs to the UvrB family. Forms a heterotetramer with UvrA during the search for lesions. Interacts with UvrC in an incision complex.

The protein localises to the cytoplasm. Functionally, the UvrABC repair system catalyzes the recognition and processing of DNA lesions. A damage recognition complex composed of 2 UvrA and 2 UvrB subunits scans DNA for abnormalities. Upon binding of the UvrA(2)B(2) complex to a putative damaged site, the DNA wraps around one UvrB monomer. DNA wrap is dependent on ATP binding by UvrB and probably causes local melting of the DNA helix, facilitating insertion of UvrB beta-hairpin between the DNA strands. Then UvrB probes one DNA strand for the presence of a lesion. If a lesion is found the UvrA subunits dissociate and the UvrB-DNA preincision complex is formed. This complex is subsequently bound by UvrC and the second UvrB is released. If no lesion is found, the DNA wraps around the other UvrB subunit that will check the other stand for damage. The protein is UvrABC system protein B of Rickettsia felis (strain ATCC VR-1525 / URRWXCal2) (Rickettsia azadi).